A 338-amino-acid polypeptide reads, in one-letter code: Probable tRNA pseudouridine synthase B (338 aa).

Residue D78 is the Nucleophile of the active site. The region spanning 245 to 320 is the PUA domain; sequence LPKIILRDSA…IAASPIRVLM (76 aa).

This sequence belongs to the pseudouridine synthase TruB family. Type 2 subfamily.

It catalyses the reaction uridine(55) in tRNA = pseudouridine(55) in tRNA. Functionally, could be responsible for synthesis of pseudouridine from uracil-55 in the psi GC loop of transfer RNAs. This Methanosarcina acetivorans (strain ATCC 35395 / DSM 2834 / JCM 12185 / C2A) protein is Probable tRNA pseudouridine synthase B.